Here is a 318-residue protein sequence, read N- to C-terminus: Ribose-phosphate pyrophosphokinase 1 (318 aa).

ATP is bound by residues 43 to 45 (DGE) and 102 to 103 (RQ). 2 residues coordinate Mg(2+): His-136 and Asp-176. Residue Lys-199 is part of the active site. D-ribose 5-phosphate contacts are provided by residues Arg-201, Asp-225, and 229-233 (DTAGT).

This sequence belongs to the ribose-phosphate pyrophosphokinase family. Class I subfamily. Homohexamer. Requires Mg(2+) as cofactor.

It is found in the cytoplasm. It catalyses the reaction D-ribose 5-phosphate + ATP = 5-phospho-alpha-D-ribose 1-diphosphate + AMP + H(+). It functions in the pathway metabolic intermediate biosynthesis; 5-phospho-alpha-D-ribose 1-diphosphate biosynthesis; 5-phospho-alpha-D-ribose 1-diphosphate from D-ribose 5-phosphate (route I): step 1/1. Its function is as follows. Involved in the biosynthesis of the central metabolite phospho-alpha-D-ribosyl-1-pyrophosphate (PRPP) via the transfer of pyrophosphoryl group from ATP to 1-hydroxyl of ribose-5-phosphate (Rib-5-P). This is Ribose-phosphate pyrophosphokinase 1 from Listeria monocytogenes serotype 4b (strain F2365).